The sequence spans 30 residues: Kalata-B16 (30 aa).

Positions 1–30 (GIPCAESCVYIPCTITALLGCKCQDKVCYD) form a cross-link, cyclopeptide (Gly-Asp). Intrachain disulfides connect Cys-4/Cys-21, Cys-8/Cys-23, and Cys-13/Cys-28.

In terms of processing, this is a cyclic peptide.

Probably participates in a plant defense mechanism. The sequence is that of Kalata-B16 from Oldenlandia affinis.